The chain runs to 544 residues: BTB/POZ domain-containing protein At2g13690 (544 aa).

Disordered stretches follow at residues 34–66 (ASPD…PQSS) and 82–111 (LSPG…EEDD). Positions 37 to 55 (DTRSISSRNHIPAKSQQQR) are enriched in polar residues. Low complexity predominate over residues 93 to 103 (DPTVTTMQETE). The region spanning 142 to 225 (YDARLSLKGR…MFEESNVIIK (84 aa)) is the BTB domain.

The protein operates within protein modification; protein ubiquitination. May act as a substrate-specific adapter of an E3 ubiquitin-protein ligase complex (CUL3-RBX1-BTB) which mediates the ubiquitination and subsequent proteasomal degradation of target proteins. This chain is BTB/POZ domain-containing protein At2g13690 (PRL1-IFG), found in Arabidopsis thaliana (Mouse-ear cress).